A 2273-amino-acid polypeptide reads, in one-letter code: Retinal-specific phospholipid-transporting ATPase ABCA4 (2273 aa).

The Cytoplasmic portion of the chain corresponds to 1-21; the sequence is MGFVRQIQLLLWKNWTLRKRQ. The helical transmembrane segment at 22–42 threads the bilayer; sequence KIRFVVELVWPLSLFLVLIWL. Residues 43–646 are Extracellular-facing; the sequence is RNANPLYSHH…MPYPCFVDDS (604 aa). Disulfide bonds link cysteine 54–cysteine 81 and cysteine 75–cysteine 324. A glycan (N-linked (GlcNAc...) asparagine) is linked at asparagine 98. Positions 336 and 338 each coordinate Mg(2+). A disulfide bond links cysteine 370 and cysteine 519. Asparagine 415, asparagine 444, and asparagine 504 each carry an N-linked (GlcNAc...) asparagine glycan. Positions 587 and 653 each coordinate an N-all-trans-retinylidenephosphatidylethanolamine. Disulfide bonds link cysteine 641–cysteine 1490, cysteine 1444–cysteine 1455, and cysteine 1488–cysteine 1502. The chain crosses the membrane as a helical span at residues 647–667; it reads FMIILNRCFPIFMVLAWIYSV. Over 668–699 the chain is Cytoplasmic; sequence SMTVKSIVLEKELRLKETLKNQGVSNAVIWCT. A helical membrane pass occupies residues 700–720; that stretch reads WFLDSFSIMSMSIFLLTIFIM. Residues 721–730 are Extracellular-facing; it reads HGRILHYSDP. Residues 731-751 form a helical membrane-spanning segment; sequence FILFLFLLAFSTATIMLCFLL. The Cytoplasmic segment spans residues 752 to 759; the sequence is STFFSKAS. A helical transmembrane segment spans residues 760–780; that stretch reads LAAACSGVIYFTLYLPHILCF. At 781–835 the chain is on the extracellular side; it reads AWQDRMTAELKKAVSLLSPVAFGFGTEYLVRFEEQGLGLQWSNIGNSPTEGDEFS. A helical membrane pass occupies residues 836–856; the sequence is FLLSMQMMLLDAAVYGLLAWY. Over 857 to 1376 the chain is Cytoplasmic; that stretch reads LDQVFPGDYG…IRSHKDFLAQ (520 aa). A disordered region spans residues 891–911; sequence ERALEKTEPLTEETEDPEHPE. A Phosphothreonine modification is found at threonine 901. The ABC transporter 1 domain maps to 929 to 1160; the sequence is VCVKNLVKIF…FGTGLYLTLV (232 aa). ATP is bound by residues phenylalanine 938, glycine 966, and lysine 969. Threonine 970 is a binding site for Mg(2+). ATP contacts are provided by threonine 971, glutamine 1010, lysine 1054, glycine 1064, glycine 1065, and histidine 1118. Serine 1185 bears the Phosphoserine mark. The interval 1284-1345 is disordered; sequence PLFAGGAQQK…EPECPGPQLN (62 aa). Phosphothreonine is present on threonine 1313. A Phosphoserine modification is found at serine 1317. Residues 1331-1340 are compositionally biased toward pro residues; the sequence is GQPPPEPECP. Residues 1377–1397 traverse the membrane as a helical segment; that stretch reads IVLPATFVFLALMLSIVIPPF. The Extracellular portion of the chain corresponds to 1398–1727; that stretch reads GEYPALTLHP…VSPTTYWVTN (330 aa). Asparagine 1469 is a glycosylation site (N-linked (GlcNAc...) asparagine). 3 N-linked (GlcNAc...) asparagine glycosylation sites follow: asparagine 1529, asparagine 1588, and asparagine 1662. The chain crosses the membrane as a helical span at residues 1728-1748; the sequence is FLWDIMNYSVSAGLVVGIFIG. The Cytoplasmic segment spans residues 1749-1759; it reads FQKKAYTSPEN. A helical membrane pass occupies residues 1760-1780; that stretch reads LPALVALLLLYGWAVIPMMYP. The Extracellular portion of the chain corresponds to 1781 to 1792; the sequence is ASFLFDVPSTAY. The helical transmembrane segment at 1793–1813 threads the bilayer; the sequence is VALSCANLFIGINSSAITFIL. Over 1814 to 1831 the chain is Cytoplasmic; it reads ELFENNRTLLRFNAVLRK. Residues 1832 to 1852 form a helical membrane-spanning segment; that stretch reads LLIVFPHFCLGRGLIDLALSQ. The Extracellular portion of the chain corresponds to 1853–1873; the sequence is AVTDVYARFGEEHSANPFHWD. Residues 1874–1894 traverse the membrane as a helical segment; sequence LIGKNLFAMVVEGVVYFLLTL. Over 1895-2273 the chain is Cytoplasmic; sequence LVQRHFFLSQ…AAGASRQAQD (379 aa). In terms of domain architecture, ABC transporter 2 spans 1938 to 2170; sequence LRLHELTKIY…FGDGYIVTMK (233 aa). ATP-binding residues include asparagine 1974, glycine 1975, lysine 1978, threonine 1979, threonine 1980, and glycine 2073. Threonine 1979 is a binding site for Mg(2+). The essential for ATP binding and ATPase activity stretch occupies residues 2244–2249; the sequence is VFVNFA.

Belongs to the ABC transporter superfamily. ABCA family. Post-translationally, proteolytic cleavage by trypsin leads to a 120-kDa N-terminal fragment and a 115-kDa C-terminal fragment that are linked through disulfide bonds. In terms of processing, N-glycosylated. Phosphorylation is independent of light exposure and modulates ATPase activity. Retinal-specific. Seems to be exclusively found in the rims of rod photoreceptor cells.

The protein resides in the membrane. The protein localises to the endoplasmic reticulum. It is found in the cytoplasmic vesicle. Its subcellular location is the cell projection. It localises to the cilium. The protein resides in the photoreceptor outer segment. It carries out the reaction an N-all-trans-retinylidenephosphatidylethanolamine(out) + ATP + H2O = an N-all-trans-retinylidenephosphatidylethanolamine(in) + ADP + phosphate + H(+). It catalyses the reaction ATP + H2O + phospholipidSide 1 = ADP + phosphate + phospholipidSide 2.. The catalysed reaction is a 1,2-diacyl-sn-glycero-3-phosphoethanolamine(out) + ATP + H2O = a 1,2-diacyl-sn-glycero-3-phosphoethanolamine(in) + ADP + phosphate + H(+). The enzyme catalyses N-11-cis-retinylidenephosphatidylethanolamine(out) + ATP + H2O = N-11-cis-retinylidenephosphatidylethanolamine(in) + ADP + phosphate + H(+). It carries out the reaction ATP + H2O = ADP + phosphate + H(+). ATPase activity is decreased by cholesterol and ceramide. Phospholipids translocase activity is highly reduced by berylium fluoride and aluminum floride. N-ethylmaleimide inhibits phospholipid translocase activity. In terms of biological role, flippase that catalyzes in an ATP-dependent manner the transport of retinal-phosphatidylethanolamine conjugates like 11-cis and all-trans isomers of N-retinylidene-phosphatidylethanolamine (N-Ret-PE) from the lumen to the cytoplasmic leaflet of photoreceptor outer segment disk membranes, where 11-cis-retinylidene-phosphatidylethanolamine is then isomerized to its all-trans isomer and reduced by RDH8 to produce all-trans-retinol. This transport activity ensures that all-trans-retinal generated from photoexcitation and 11-cis-retinal not needed for the regeneration of rhodopsin and cone opsins are effectively cleared from the photoreceptors, therefore preventing their accumulation and the formation of toxic bisretinoid. Displays ATPase activity in vitro in absence of retinal substrate. May display GTPase activity that is strongly influenced by the lipid environment and the presence of retinoid compounds. Binds the unprotonated form of N-retinylidene-phosphatidylethanolamine with high affinity in the absence of ATP, and ATP binding and hydrolysis induce a protein conformational change that causes N-retinylidene-phosphatidylethanolamine release. This is Retinal-specific phospholipid-transporting ATPase ABCA4 from Homo sapiens (Human).